The primary structure comprises 284 residues: RNase adapter protein RapZ (284 aa).

ATP is bound at residue 8–15; the sequence is GRSGSGKS. Position 56–59 (56–59) interacts with GTP; sequence DVRN. The RNA-binding stretch occupies residues 266–284; it reads RSRGKNVQSRHRTLEKRKS.

It belongs to the RapZ-like family. RapZ subfamily. In terms of assembly, homotrimer.

Its function is as follows. Modulates the synthesis of GlmS, by affecting the processing and stability of the regulatory small RNA GlmZ. When glucosamine-6-phosphate (GlcN6P) concentrations are high in the cell, RapZ binds GlmZ and targets it to cleavage by RNase E. Consequently, GlmZ is inactivated and unable to activate GlmS synthesis. Under low GlcN6P concentrations, RapZ is sequestered and inactivated by an other regulatory small RNA, GlmY, preventing GlmZ degradation and leading to synthesis of GlmS. In Klebsiella pneumoniae (strain 342), this protein is RNase adapter protein RapZ.